Reading from the N-terminus, the 365-residue chain is Succinyl-diaminopimelate desuccinylase (365 aa).

A Zn(2+)-binding site is contributed by His-65. Asp-67 is a catalytic residue. Asp-96 contributes to the Zn(2+) binding site. The Proton acceptor role is filled by Glu-126. Glu-127, Glu-155, and His-340 together coordinate Zn(2+).

Belongs to the peptidase M20A family. DapE subfamily. As to quaternary structure, homodimer. The cofactor is Zn(2+). It depends on Co(2+) as a cofactor.

The enzyme catalyses N-succinyl-(2S,6S)-2,6-diaminopimelate + H2O = (2S,6S)-2,6-diaminopimelate + succinate. The protein operates within amino-acid biosynthesis; L-lysine biosynthesis via DAP pathway; LL-2,6-diaminopimelate from (S)-tetrahydrodipicolinate (succinylase route): step 3/3. Its function is as follows. Catalyzes the hydrolysis of N-succinyl-L,L-diaminopimelic acid (SDAP), forming succinate and LL-2,6-diaminopimelate (DAP), an intermediate involved in the bacterial biosynthesis of lysine and meso-diaminopimelic acid, an essential component of bacterial cell walls. This chain is Succinyl-diaminopimelate desuccinylase, found in Campylobacter jejuni subsp. doylei (strain ATCC BAA-1458 / RM4099 / 269.97).